The following is a 132-amino-acid chain: Fatty acid-binding protein, adipocyte (132 aa).

An N-acetylcysteine modification is found at C2. Phosphoserine is present on S13. A Phosphotyrosine; by Tyr-kinases modification is found at Y20. The Nuclear localization signal motif lies at 22–32 (KEVGVGFATRK). A fatty acid is bound at residue 127–129 (RVY).

Belongs to the calycin superfamily. Fatty-acid binding protein (FABP) family. As to quaternary structure, monomer. Homodimer. Interacts with PPARG.

It localises to the cytoplasm. It is found in the nucleus. Functionally, lipid transport protein in adipocytes. Binds both long chain fatty acids and retinoic acid. Delivers long-chain fatty acids and retinoic acid to their cognate receptors in the nucleus. The protein is Fatty acid-binding protein, adipocyte (Fabp4) of Rattus norvegicus (Rat).